The chain runs to 713 residues: Probable arginine--tRNA ligase, cytoplasmic (713 aa).

Positions 74–113 (KNKKNGVKATSTSSPSSSTSAPAEKKAKKDGKTGGAPPKQ) are disordered. The segment covering 81–95 (KATSTSSPSSSTSAP) has biased composition (low complexity). Positions 96 to 105 (AEKKAKKDGK) are enriched in basic and acidic residues. L-arginine is bound by residues 252–254 (SPN), His263, Tyr438, Asp442, and Gln466. Residues 252 to 263 (SPNIAKEMHVGH) carry the 'HIGH' region motif. The interval 583–597 (NTAVYLLYAYTRIQS) is interaction with tRNA.

Belongs to the class-I aminoacyl-tRNA synthetase family.

The protein localises to the cytoplasm. It localises to the cytosol. It carries out the reaction tRNA(Arg) + L-arginine + ATP = L-arginyl-tRNA(Arg) + AMP + diphosphate. Its function is as follows. Forms part of a macromolecular complex that catalyzes the attachment of specific amino acids to cognate tRNAs during protein synthesis. The protein is Probable arginine--tRNA ligase, cytoplasmic of Caenorhabditis elegans.